We begin with the raw amino-acid sequence, 753 residues long: Inactive protein-tyrosine phosphatase egg-5 (753 aa).

Disordered stretches follow at residues 26 to 46 and 77 to 116; these read TSLQ…STDN and RKKV…YAAP. Residues 35–46 show a composition bias toward low complexity; sequence NTDDSSADSTDN. Over residues 84-94 the composition is skewed to basic and acidic residues; the sequence is AQKDRRSKERL. The Tyrosine-protein phosphatase domain occupies 408 to 661; the sequence is MERRFEILEN…IFVHRLVAFF (254 aa).

Belongs to the protein-tyrosine phosphatase family. In terms of assembly, part of a complex, consisting of pseudophosphatases egg-3, egg-4, egg-5 and kinase mbk-2; this complex is required for the oocyte-to-zygote transition. Interacts (via tyrosine-protein phosphatase domain) with kinase mbk-2 (via 'Tyr-619' and 'Tyr-621'); mbk-2 tyrosine phosphorylation enhances the interaction.

It localises to the cytoplasm. The protein resides in the cell cortex. Functionally, inactive phosphatase which acts redundantly with egg-4 in the oocyte-to-zygote transition. Required for polarized cortical actin cytoskeleton rearrangement in the oocyte before and after fertilization. Together with egg-4, required for the cortical localization of kinase mbk-2 in maturing oocyte until the end of meiosis I. Also required for kinase mbk-2, pseudophosphatase egg-3 and chitin synthase chs-1 localization to cytoplasmic foci after fertilization. In Caenorhabditis elegans, this protein is Inactive protein-tyrosine phosphatase egg-5.